Reading from the N-terminus, the 279-residue chain is Tryptophan synthase alpha chain (279 aa).

Catalysis depends on proton acceptor residues E50 and D61.

It belongs to the TrpA family. Tetramer of two alpha and two beta chains.

It catalyses the reaction (1S,2R)-1-C-(indol-3-yl)glycerol 3-phosphate + L-serine = D-glyceraldehyde 3-phosphate + L-tryptophan + H2O. Its pathway is amino-acid biosynthesis; L-tryptophan biosynthesis; L-tryptophan from chorismate: step 5/5. In terms of biological role, the alpha subunit is responsible for the aldol cleavage of indoleglycerol phosphate to indole and glyceraldehyde 3-phosphate. The chain is Tryptophan synthase alpha chain from Brucella melitensis biotype 1 (strain ATCC 23456 / CCUG 17765 / NCTC 10094 / 16M).